The chain runs to 172 residues: Mitochondrial import inner membrane translocase subunit Tim17-B (172 aa).

A disulfide bond links Cys-9 and Cys-78. Transmembrane regions (helical) follow at residues Cys-17–Phe-37, Gln-61–Asp-77, and Val-113–Leu-133. The tract at residues Pro-146–His-172 is disordered.

The protein belongs to the Tim17/Tim22/Tim23 family. As to quaternary structure, component of the TIM23 complex at least composed of TIMM23, TIMM17 (TIMM17A or TIMM17B) and TIMM50. The complex interacts with the TIMM44 component of the PAM complex and with DNAJC15. Post-translationally, forms one disulfide bond. Expression is abundant in heart and skeletal muscle, intermediate in brain, and weak in pancreas, placenta, kidney and liver.

The protein resides in the mitochondrion inner membrane. Essential component of the TIM23 complex, a complex that mediates the translocation of transit peptide-containing proteins across the mitochondrial inner membrane. The sequence is that of Mitochondrial import inner membrane translocase subunit Tim17-B (TIMM17B) from Homo sapiens (Human).